Reading from the N-terminus, the 92-residue chain is Small ribosomal subunit protein uS19c (92 aa).

This sequence belongs to the universal ribosomal protein uS19 family.

It localises to the plastid. The protein resides in the chloroplast. Functionally, protein S19 forms a complex with S13 that binds strongly to the 16S ribosomal RNA. The chain is Small ribosomal subunit protein uS19c from Pinus koraiensis (Korean pine).